The primary structure comprises 785 residues: E3 UFM1-protein ligase 1 homolog (785 aa).

The disordered stretch occupies residues 404–482; that stretch reads NASFQDQDDD…AGGGGGNKKT (79 aa).

It belongs to the UFL1 family.

In terms of biological role, E3 UFM1-protein ligase that mediates ufmylation of target proteins. This is E3 UFM1-protein ligase 1 homolog from Drosophila persimilis (Fruit fly).